Consider the following 387-residue polypeptide: Flap endonuclease 1 (387 aa).

The tract at residues 1 to 104 is N-domain; the sequence is MGILGLSKLI…GELAKRAERR (104 aa). A Mg(2+)-binding site is contributed by D34. Residues R47 and R70 each coordinate DNA. D86, E158, E160, D179, and D181 together coordinate Mg(2+). The interval 122-253 is I-domain; that stretch reads GIEKFNRRLV…KRAIELINNY (132 aa). E158 lines the DNA pocket. Residues G231 and D233 each coordinate DNA. D233 lines the Mg(2+) pocket. An interaction with PCNA region spans residues 336–344; the sequence is TQVRLDSFF. A disordered region spans residues 345 to 387; sequence KTLPSTPNATNAAKRKAEEAKKSANNKKAKTSGGGGGRGRRPK.

The protein belongs to the XPG/RAD2 endonuclease family. FEN1 subfamily. Interacts with PCNA. Three molecules of FEN1 bind to one PCNA trimer with each molecule binding to one PCNA monomer. PCNA stimulates the nuclease activity without altering cleavage specificity. Mg(2+) serves as cofactor. Post-translationally, phosphorylated. Phosphorylation upon DNA damage induces relocalization to the nuclear plasma.

The protein resides in the nucleus. It is found in the nucleolus. It localises to the nucleoplasm. The protein localises to the mitochondrion. Its function is as follows. Structure-specific nuclease with 5'-flap endonuclease and 5'-3' exonuclease activities involved in DNA replication and repair. During DNA replication, cleaves the 5'-overhanging flap structure that is generated by displacement synthesis when DNA polymerase encounters the 5'-end of a downstream Okazaki fragment. It enters the flap from the 5'-end and then tracks to cleave the flap base, leaving a nick for ligation. Also involved in the long patch base excision repair (LP-BER) pathway, by cleaving within the apurinic/apyrimidinic (AP) site-terminated flap. Acts as a genome stabilization factor that prevents flaps from equilibrating into structures that lead to duplications and deletions. Also possesses 5'-3' exonuclease activity on nicked or gapped double-stranded DNA, and exhibits RNase H activity. Also involved in replication and repair of rDNA and in repairing mitochondrial DNA. The chain is Flap endonuclease 1 from Drosophila yakuba (Fruit fly).